The primary structure comprises 104 residues: ATP-dependent Clp protease adapter protein ClpS (104 aa).

This sequence belongs to the ClpS family. Binds to the N-terminal domain of the chaperone ClpA.

In terms of biological role, involved in the modulation of the specificity of the ClpAP-mediated ATP-dependent protein degradation. The sequence is that of ATP-dependent Clp protease adapter protein ClpS from Desulforapulum autotrophicum (strain ATCC 43914 / DSM 3382 / VKM B-1955 / HRM2) (Desulfobacterium autotrophicum).